The chain runs to 111 residues: Sulditoxin subunit B (111 aa).

The signal sequence occupies residues 1–19 (MKTLLLALAVVVLVCLGSA). A propeptide spanning residues 20 to 34 (NELGLGRQQIDRGRR) is cleaved from the precursor. Q35 bears the Pyrrolidone carboxylic acid mark. 5 disulfide bridges follow: C44-C68, C47-C55, C61-C87, C91-C102, and C103-C108.

It belongs to the three-finger toxin family. Ancestral subfamily. Boigatoxin sub-subfamily. In terms of assembly, heterodimer of sulditoxin subunits A and B; probably disulfide-linked. Expressed by the venom gland.

The protein resides in the secreted. In terms of biological role, reptile-specific neurotoxin (tested on geckos). Inhibits nicotinic acetylcholine receptor (nAChR). Not toxic to mammals (tested on mice). The protein is Sulditoxin subunit B of Spilotes sulphureus (Amazon puffing snake).